A 156-amino-acid chain; its full sequence is Extracellular giant hemoglobin major globin subunit A1 (156 aa).

Positions 1–16 (MKVLIIFACLVVMASA) are cleaved as a signal peptide. Residues 17 to 156 (VCNRLEQILV…YERIASGISG (140 aa)) form the Globin domain. A disulfide bond links cysteine 18 and cysteine 146. Hydrogen sulfide is bound at residue cysteine 79. Histidine 110 contributes to the heme b binding site.

It belongs to the globin family. The 400 kDa hemoglobin consists of a spherical 24-mer arranged as a double layer of dome-shaped dodecamers. Each dodecamer is composed of the 3-fold trimer of the tetramer A1-A2-B1-B2 having one intra-tetramer (A1-B2) disulfide bond and one inter-tetramer (B1-B2) disulfide bond per tetramer.

The protein localises to the secreted. In terms of biological role, the extracellular giant hemoglobin is able to bind and transport oxygen and hydrosulfide simultaneously and reversibly at two different sites. The chain is Extracellular giant hemoglobin major globin subunit A1 (ghbA1) from Oligobrachia mashikoi (Beard worm).